Here is a 517-residue protein sequence, read N- to C-terminus: Retinal dehydrogenase 2 (517 aa).

NAD(+)-binding positions include 184–186 (IPW), 210–213 (KPAE), and 264–266 (STE). The active-site Proton acceptor is the Glu-286. Cys-320 serves as the catalytic Nucleophile. NAD(+)-binding positions include 366–370 (KQYNK) and Glu-417.

It belongs to the aldehyde dehydrogenase family. As to quaternary structure, homotetramer. In terms of tissue distribution, expressed in the high vocal center (HVC) which integrates auditory and motor activities and constitutes a nodal nucleus on the song system.

It is found in the cytoplasm. It catalyses the reaction retinal + NAD(+) + H2O = retinoate + NADH + 2 H(+). The enzyme catalyses all-trans-retinal + NAD(+) + H2O = all-trans-retinoate + NADH + 2 H(+). The catalysed reaction is all-trans-13,14-dihydroretinal + NAD(+) + H2O = all-trans-13,14-dihydroretinoate + NADH + 2 H(+). It functions in the pathway cofactor metabolism; retinol metabolism. Catalyzes the NAD-dependent oxidation of aldehyde substrates, such as all-trans-retinal and all-trans-13,14-dihydroretinal, to their corresponding carboxylic acids, all-trans-retinoate and all-trans-13,14-dihydroretinoate, respectively. Retinoate signaling is critical for the transcriptional control of many genes, for instance it is crucial for initiation of meiosis in both male and female. Recognizes retinal as substrate, both in its free form and when bound to cellular retinol-binding protein. Lacks activity with benzaldehyde, acetaldehyde and octanal. Displays complete lack of activity with citral. Plays a significant role in the acquisition and production of learned songs. The sequence is that of Retinal dehydrogenase 2 (ALDH1A2) from Taeniopygia guttata (Zebra finch).